The chain runs to 138 residues: Nucleoside diphosphate kinase (138 aa).

Residues Lys-10, Phe-58, Arg-86, Thr-92, Arg-103, and Asn-113 each contribute to the ATP site. His-116 acts as the Pros-phosphohistidine intermediate in catalysis.

The protein belongs to the NDK family. Homotetramer. Requires Mg(2+) as cofactor.

Its subcellular location is the cytoplasm. It catalyses the reaction a 2'-deoxyribonucleoside 5'-diphosphate + ATP = a 2'-deoxyribonucleoside 5'-triphosphate + ADP. The catalysed reaction is a ribonucleoside 5'-diphosphate + ATP = a ribonucleoside 5'-triphosphate + ADP. In terms of biological role, major role in the synthesis of nucleoside triphosphates other than ATP. The ATP gamma phosphate is transferred to the NDP beta phosphate via a ping-pong mechanism, using a phosphorylated active-site intermediate. This Actinobacillus pleuropneumoniae serotype 7 (strain AP76) protein is Nucleoside diphosphate kinase.